The following is a 62-amino-acid chain: MARKCFITGKKTKAGNNRSHAMNASKRTWGANLQKVRILVDGKPKKVYVSARALKSGKVERV.

Belongs to the bacterial ribosomal protein bL28 family.

The chain is Large ribosomal subunit protein bL28 from Bacillus velezensis (strain DSM 23117 / BGSC 10A6 / LMG 26770 / FZB42) (Bacillus amyloliquefaciens subsp. plantarum).